A 210-amino-acid chain; its full sequence is Isochorismatase domain-containing protein 2B (210 aa).

Position 178 is an N6-succinyllysine (Lys-178).

Belongs to the isochorismatase family. As to quaternary structure, interacts with CDKN2A. As to expression, ubiquitous. Expressed predominantly in uterus, stomach and urinary tract.

The protein resides in the cytoplasm. Its subcellular location is the nucleus. The protein is Isochorismatase domain-containing protein 2B (Isoc2b) of Mus musculus (Mouse).